The chain runs to 42 residues: Photosystem I reaction center subunit IX (42 aa).

The chain crosses the membrane as a helical span at residues 7–27 (FLSLGPVLLVLWLSVQATLLI).

The protein belongs to the PsaJ family.

Its subcellular location is the cellular thylakoid membrane. Functionally, may help in the organization of the PsaE and PsaF subunits. The protein is Photosystem I reaction center subunit IX of Gloeothece citriformis (strain PCC 7424) (Cyanothece sp. (strain PCC 7424)).